We begin with the raw amino-acid sequence, 274 residues long: 2,3,4,5-tetrahydropyridine-2,6-dicarboxylate N-succinyltransferase (274 aa).

Residues Arg104 and Asp141 each coordinate substrate.

This sequence belongs to the transferase hexapeptide repeat family. As to quaternary structure, homotrimer.

It is found in the cytoplasm. It catalyses the reaction (S)-2,3,4,5-tetrahydrodipicolinate + succinyl-CoA + H2O = (S)-2-succinylamino-6-oxoheptanedioate + CoA. It participates in amino-acid biosynthesis; L-lysine biosynthesis via DAP pathway; LL-2,6-diaminopimelate from (S)-tetrahydrodipicolinate (succinylase route): step 1/3. The protein is 2,3,4,5-tetrahydropyridine-2,6-dicarboxylate N-succinyltransferase of Idiomarina loihiensis (strain ATCC BAA-735 / DSM 15497 / L2-TR).